The primary structure comprises 561 residues: Methyl-accepting chemotaxis protein CtpM (561 aa).

Over 1-11 (MMRLTLKSKVL) the chain is Cytoplasmic. A helical transmembrane segment spans residues 12–32 (LLAMVPVLLFALVLSGGAVLI). Topologically, residues 33 to 205 (LKKQADAEVK…KQDIDERIGT (173 aa)) are periplasmic. Residues 206–226 (LIASIVGIAGVLLVVLLVIGL) form a helical membrane-spanning segment. Topologically, residues 227–561 (AVANAMLRPL…LGRLVGQFRI (335 aa)) are cytoplasmic. The region spanning 230-284 (NAMLRPLHQIRQNLDDIAAGEGDLTRRLPVTSYDELGELAGSFNRFVEKIHGLVR) is the HAMP domain. A Methyl-accepting transducer domain is found at 289–525 (MTGDLKQLVE…EINRSVHQIA (237 aa)). Residues 333 to 357 (HEVAQSAQRAAEAAQQTDHEGQAAK) are disordered. The segment covering 336 to 348 (AQSAQRAAEAAQQ) has biased composition (low complexity).

The protein belongs to the methyl-accepting chemotaxis (MCP) protein family. In terms of assembly, homodimer. The ligand-binding domain (LBD) is dimeric in the presence and the absence of ligands.

It is found in the cell inner membrane. Its function is as follows. Chemotactic-signal transducers respond to changes in the concentration of attractants and repellents in the environment, transduce a signal from the outside to the inside of the cell, and facilitate sensory adaptation through the variation of the level of methylation. Directly recognizes five C4-dicarboxylic acids: L-malic, citramalic, citraconic, bromosuccinic and methylsuccinic acids. Three of the identified ligands act as chemoattractants (L-malic, D,L-bromosuccinic and L-citramalic acids) whereas two of them (L-methylsuccinic and citraconic acids) behave as antagonists by inhibiting the downstream chemotaxis signaling cascade. Antagonists compete with chemoattractants, thereby decreasing the affinity for chemoattractants and the subsequent chemotactic response. Acts through the che chemosensory pathway. This Pseudomonas aeruginosa (strain ATCC 15692 / DSM 22644 / CIP 104116 / JCM 14847 / LMG 12228 / 1C / PRS 101 / PAO1) protein is Methyl-accepting chemotaxis protein CtpM.